Here is a 196-residue protein sequence, read N- to C-terminus: Probable malonic semialdehyde reductase RutE (196 aa).

It belongs to the nitroreductase family. HadB/RutE subfamily. FMN is required as a cofactor.

It catalyses the reaction 3-hydroxypropanoate + NADP(+) = 3-oxopropanoate + NADPH + H(+). Functionally, may reduce toxic product malonic semialdehyde to 3-hydroxypropionic acid, which is excreted. The chain is Probable malonic semialdehyde reductase RutE from Escherichia coli O8 (strain IAI1).